Reading from the N-terminus, the 290-residue chain is uncharacterized protein (290 aa).

Helical transmembrane passes span 14 to 34 (ALLN…IGIL), 82 to 102 (ISSL…LIGG), 115 to 135 (NLIA…IYLY), 158 to 174 (DAFV…SSQL), and 176 to 196 (LPWV…KTAW).

It belongs to the cation diffusion facilitator (CDF) transporter (TC 2.A.4) family.

It is found in the cell membrane. This is an uncharacterized protein from Bacillus subtilis (strain 168).